The following is a 374-amino-acid chain: N5-carboxyaminoimidazole ribonucleotide synthase (374 aa).

Residues R108, K148, 153–159 (GYDGKGQ), 183–186 (EKYL), E191, H214, and 266–267 (NE) contribute to the ATP site. One can recognise an ATP-grasp domain in the interval 112-296 (KETLKSAGTK…QFDTHILAVT (185 aa)).

Belongs to the PurK/PurT family. Homodimer.

The enzyme catalyses 5-amino-1-(5-phospho-beta-D-ribosyl)imidazole + hydrogencarbonate + ATP = 5-carboxyamino-1-(5-phospho-D-ribosyl)imidazole + ADP + phosphate + 2 H(+). Its pathway is purine metabolism; IMP biosynthesis via de novo pathway; 5-amino-1-(5-phospho-D-ribosyl)imidazole-4-carboxylate from 5-amino-1-(5-phospho-D-ribosyl)imidazole (N5-CAIR route): step 1/2. Catalyzes the ATP-dependent conversion of 5-aminoimidazole ribonucleotide (AIR) and HCO(3)(-) to N5-carboxyaminoimidazole ribonucleotide (N5-CAIR). In Staphylococcus aureus (strain MRSA252), this protein is N5-carboxyaminoimidazole ribonucleotide synthase.